A 183-amino-acid polypeptide reads, in one-letter code: ATP synthase subunit b, chloroplastic (183 aa).

Residues 27 to 49 form a helical membrane-spanning segment; the sequence is LATNPINLSVVLGVLIFFGKGVL.

Belongs to the ATPase B chain family. In terms of assembly, F-type ATPases have 2 components, F(1) - the catalytic core - and F(0) - the membrane proton channel. F(1) has five subunits: alpha(3), beta(3), gamma(1), delta(1), epsilon(1). F(0) has four main subunits: a(1), b(1), b'(1) and c(10-14). The alpha and beta chains form an alternating ring which encloses part of the gamma chain. F(1) is attached to F(0) by a central stalk formed by the gamma and epsilon chains, while a peripheral stalk is formed by the delta, b and b' chains.

Its subcellular location is the plastid. It localises to the chloroplast thylakoid membrane. Functionally, f(1)F(0) ATP synthase produces ATP from ADP in the presence of a proton or sodium gradient. F-type ATPases consist of two structural domains, F(1) containing the extramembraneous catalytic core and F(0) containing the membrane proton channel, linked together by a central stalk and a peripheral stalk. During catalysis, ATP synthesis in the catalytic domain of F(1) is coupled via a rotary mechanism of the central stalk subunits to proton translocation. Component of the F(0) channel, it forms part of the peripheral stalk, linking F(1) to F(0). This chain is ATP synthase subunit b, chloroplastic, found in Ranunculus macranthus (Large buttercup).